Reading from the N-terminus, the 328-residue chain is Acyl-CoA wax alcohol acyltransferase 1 (328 aa).

A run of 2 helical transmembrane segments spans residues 12-32 and 34-53; these read SLSL…VQPL and ICLL…VWLL.

Belongs to the diacylglycerol acyltransferase family.

Its subcellular location is the endoplasmic reticulum membrane. It catalyses the reaction a long chain fatty alcohol + a fatty acyl-CoA = a wax ester + CoA. The catalysed reaction is 1,2-di-(9Z-octadecenoyl)-sn-glycerol + (9Z)-octadecenoyl-CoA = 1,2,3-tri-(9Z-octadecenoyl)-glycerol + CoA. It carries out the reaction hexadecan-1-ol + (9Z)-octadecenoyl-CoA = hexadecanyl (9Z)-octadecenoate + CoA. The enzyme catalyses decan-1-ol + (9Z)-octadecenoyl-CoA = 1-O-decyl-(9Z)-octadecenoate + CoA. It catalyses the reaction (9Z)-hexadecen-1-ol + (9Z)-octadecenoyl-CoA = 1-O-(9Z)-hexadecenyl (9Z)-octadecenoate + CoA. The catalysed reaction is octadecan-1-ol + (9Z)-octadecenoyl-CoA = 1-O-octadecyl (9Z)-octadecenoate + CoA. It carries out the reaction (9Z)-octadecen-1-ol + (9Z)-octadecenoyl-CoA = 1-O-(9Z)-octadecenyl (9Z)-octadecenoate + CoA. The enzyme catalyses hexadecan-1-ol + hexadecanoyl-CoA = hexadecanyl hexadecanoate + CoA. It catalyses the reaction hexadecan-1-ol + (9Z)-hexadecenoyl-CoA = 1-O-hexadecyl (9Z)-hexadecenoate + CoA. The catalysed reaction is hexadecan-1-ol + octadecanoyl-CoA = hexadecanyl octadecanoate + CoA. It carries out the reaction eicosan-1-ol + (9Z)-octadecenoyl-CoA = 1-O-eicosanyl (9Z)-octadecenoate + CoA. Acyltransferase that catalyzes the formation of ester bonds between fatty alcohols and fatty acyl-CoAs to form wax monoesters. Shows a strong preference for decyl alcohol (C10), with less activity towards C16 and C18 alcohols. Shows a strong preference for saturated acyl-CoAs. The protein is Acyl-CoA wax alcohol acyltransferase 1 (Awat1) of Mus musculus (Mouse).